A 113-amino-acid polypeptide reads, in one-letter code: Urotensin-2B (113 aa).

Residues 1–27 (MKVFSTSLWCGLLTLLSVMNLFKSVRG) form the signal peptide. A propeptide spanning residues 28-103 (RPHLSSGHEL…LDNLSSSHTK (76 aa)) is cleaved from the precursor. C107 and C112 form a disulfide bridge.

This sequence belongs to the urotensin-2 family.

The protein localises to the secreted. In terms of biological role, potent vasoconstrictor. The chain is Urotensin-2B (Uts2b) from Mus musculus (Mouse).